Here is a 391-residue protein sequence, read N- to C-terminus: Protein ABCI12, chloroplastic (391 aa).

The transit peptide at 1 to 63 (MNHSNLANPT…LAAKRVFIVR (63 aa)) directs the protein to the chloroplast. Helical transmembrane passes span 134–154 (ANLV…ILVL), 168–188 (LLSG…PPML), 229–249 (VGST…ICLA), 263–283 (FLFP…TLLL), and 370–390 (FASV…EYFL).

It is found in the plastid. The protein resides in the chloroplast. The protein localises to the membrane. The protein is Protein ABCI12, chloroplastic (ABCI12) of Arabidopsis thaliana (Mouse-ear cress).